A 134-amino-acid chain; its full sequence is Translation initiation factor 2 subunit beta (134 aa).

This sequence belongs to the eIF-2-beta/eIF-5 family. Heterotrimer composed of an alpha, a beta and a gamma chain.

Functionally, eIF-2 functions in the early steps of protein synthesis by forming a ternary complex with GTP and initiator tRNA. The chain is Translation initiation factor 2 subunit beta from Pyrobaculum calidifontis (strain DSM 21063 / JCM 11548 / VA1).